We begin with the raw amino-acid sequence, 99 residues long: Large ribosomal subunit protein uL23 (99 aa).

It belongs to the universal ribosomal protein uL23 family. As to quaternary structure, part of the 50S ribosomal subunit. Contacts protein L29, and trigger factor when it is bound to the ribosome.

In terms of biological role, one of the early assembly proteins it binds 23S rRNA. One of the proteins that surrounds the polypeptide exit tunnel on the outside of the ribosome. Forms the main docking site for trigger factor binding to the ribosome. The polypeptide is Large ribosomal subunit protein uL23 (Magnetococcus marinus (strain ATCC BAA-1437 / JCM 17883 / MC-1)).